The sequence spans 1575 residues: Mediator of RNA polymerase II transcription subunit 1 (1575 aa).

The tract at residues 1 to 670 (MKAQGETEDS…YGSSPLERQN (670 aa)) is interaction with the Mediator complex and THRA. Residues 16–590 (MSSLLERLHA…SIKDRHESVG (575 aa)) form an interaction with ESR1 region. 2 interaction with the Mediator complex regions span residues 108-212 (FYVE…GYLT) and 215-390 (SGGH…SLQG). An interaction with THRA region spans residues 405-644 (PLILNMIRHQ…MAGNTKNHPM (240 aa)). Positions 542–789 (PASSPGYGMT…TDILSDIAEE (248 aa)) are interaction with VDR. Phosphoserine is present on S588. Positions 604–608 (LTSLL) match the LXXLL motif 1 motif. Disordered regions lie at residues 609 to 706 (QITG…QTED), 737 to 760 (HITP…SHPQ), 791 to 818 (SKLP…HSQS), 874 to 895 (SQSG…NDDF), and 951 to 1564 (SGSQ…GEED). Residues 622-632 (PTPPHHTPPPV) are compositionally biased toward pro residues. The segment at 622-701 (PTPPHHTPPP…SSRVPPDKPK (80 aa)) is interaction with GATA1. The segment at 622–701 (PTPPHHTPPP…SSRVPPDKPK (80 aa)) is interaction with PPARGC1A and THRA. The LXXLL motif 2 motif lies at 645–649 (LMNLL). A compositionally biased stretch (polar residues) spans 655-675 (QDFSTLYGSSPLERQNSSSGS). Residues 656–1066 (DFSTLYGSSP…TPPIPKITIQ (411 aa)) form an interaction with ESR1 region. S664 carries the post-translational modification Phosphoserine. Residues 696–706 (PPDKPKHQTED) show a composition bias toward basic and acidic residues. Position 795 is a phosphoserine (S795). The residue at position 805 (T805) is a Phosphothreonine. Residues 808–818 (RDSSSSGHSQS) show a composition bias toward polar residues. An Integrase domain-binding motif (IBM) motif is present at residues 875–902 (QSGFGEEYFDESSQSGDNDDFKGFASQA). 3 positions are modified to phosphoserine: S887, S953, and S955. The span at 963 to 974 (LGKEKTQKRVKE) shows a compositional bias: basic and acidic residues. The span at 976–986 (NGTGASSGSGP) shows a compositional bias: gly residues. Residue T1032 is modified to Phosphothreonine; by MAPK1 or MAPK3. Over residues 1034 to 1051 (PTSTGGSKSPGSSGRSQT) the composition is skewed to low complexity. Residues T1051 and T1057 each carry the phosphothreonine modification. Low complexity-rich tracts occupy residues 1078–1094 (SSHS…SSGS) and 1101–1152 (SSSS…SQTG). Phosphoserine is present on S1158. Positions 1158–1184 (SPITKHGLSSGSSSTKMKPQGKPSSLM) are enriched in polar residues. K1179 is modified (N6-acetyllysine). Low complexity predominate over residues 1185-1197 (NPSISKPNISPSH). The residue at position 1209 (S1209) is a Phosphoserine. T1217 carries the phosphothreonine modification. 2 stretches are compositionally biased toward low complexity: residues 1220 to 1258 (SSKA…GSVS) and 1265 to 1295 (SNSC…SKGK). S1225 carries the post-translational modification Phosphoserine. Residues 1251–1423 (SASSGSVSQK…KPGESGGDGL (173 aa)) form an interaction with TP53 region. Residues S1304 and S1349 each carry the phosphoserine modification. A compositionally biased stretch (polar residues) spans 1331–1352 (MGASTNSSNHPMSSKHNTSGGE). A compositionally biased stretch (basic and acidic residues) spans 1354-1366 (QSKREKSDKDKSK). Phosphoserine occurs at positions 1405 and 1435. Polar residues-rich tracts occupy residues 1427–1442 (IASS…SGST) and 1450–1484 (PSHS…SPSS). T1442 is subject to Phosphothreonine. Position 1459 is a phosphothreonine; by MAPK1 or MAPK3 (T1459). Phosphoserine occurs at positions 1465, 1467, 1481, 1483, and 1484. The span at 1498–1507 (KHKKHKKEKK) shows a compositional bias: basic residues. The residue at position 1523 (K1523) is an N6-acetyllysine. Residues 1527-1545 (WSKSPISSDPTASVTNNPI) are compositionally biased toward polar residues.

This sequence belongs to the Mediator complex subunit 1 family. In terms of assembly, component of the Mediator complex, which is composed of MED1, MED4, MED6, MED7, MED8, MED9, MED10, MED11, MED12, MED13, MED13L, MED14, MED15, MED16, MED17, MED18, MED19, MED20, MED21, MED22, MED23, MED24, MED25, MED26, MED27, MED29, MED30, MED31, CCNC, CDK8 and CDC2L6/CDK11. The MED12, MED13, CCNC and CDK8 subunits form a distinct module termed the CDK8 module. Mediator containing the CDK8 module is less active than Mediator lacking this module in supporting transcriptional activation. Individual preparations of the Mediator complex lacking one or more distinct subunits have been variously termed ARC, CRSP, DRIP, PC2, SMCC and TRAP. This subunit specifically interacts with a number of nuclear receptors in a ligand-dependent fashion including AR, ESR1, ESR2, PPARA, PPARG, RORA, RXRA, RXRG, THRA, THRB and VDR. Interacts with CTNNB1, GABPA, GLI3, PPARGC1A and TP53. Interacts with GATA1 and YWHAH. Interacts with CLOCK; this interaction requires the presence of THRAP3. Interacts with CCAR1. Interacts with NR4A3. Interacts (via IBM motif) with PSIP1 (via IBD domain); phosphorylation increases its affinity for PSIP1. Interacts with USP22. In terms of processing, phosphorylated by MAPK1 or MAPK3 during G2/M phase which may enhance protein stability and promote entry into the nucleolus. Phosphorylation increases its interaction with PSIP1. In terms of tissue distribution, widely expressed in the adult, with high levels of expression in the liver, lung, intestinal mucosa, kidney cortex, thymic cortex, splenic follicle and seminiferous epithelium in testis. Also expressed in the adult heart, brain, spleen and skeletal muscle.

The protein resides in the nucleus. In terms of biological role, component of the Mediator complex, a coactivator involved in the regulated transcription of nearly all RNA polymerase II-dependent genes. Mediator functions as a bridge to convey information from gene-specific regulatory proteins to the basal RNA polymerase II transcription machinery. Mediator is recruited to promoters by direct interactions with regulatory proteins and serves as a scaffold for the assembly of a functional preinitiation complex with RNA polymerase II and the general transcription factors. Essential for embryogenesis, including development of the central nervous system, heart, liver and placenta and for erythropoiesis. Also required for normal transcriptional control of thyroid-stimulating hormone beta (TSHB) in the pituitary. Acts as a coactivator for GATA1-mediated transcriptional activation during erythroid differentiation of K562 erythroleukemia cells. This Mus musculus (Mouse) protein is Mediator of RNA polymerase II transcription subunit 1 (Med1).